The chain runs to 257 residues: NAD-capped RNA hydrolase NudC (257 aa).

Substrate-binding residues include K25 and R69. The Zn(2+) site is built by C98 and C101. Residue E111 participates in substrate binding. 2 residues coordinate Zn(2+): C116 and C119. Y124 is a binding site for substrate. One can recognise a Nudix hydrolase domain in the interval 125–248 (PQIAPCIIVA…TVARRLIEDT (124 aa)). A divalent metal cation contacts are provided by A158, E174, and E178. The Nudix box signature appears at 159–180 (GFVEVGETLEQAVAREVMEESG). Residue 192–199 (QPWPFPQS) participates in substrate binding. E219 lines the a divalent metal cation pocket. Residue A241 participates in substrate binding.

It belongs to the Nudix hydrolase family. NudC subfamily. In terms of assembly, homodimer. The cofactor is Mg(2+). Mn(2+) serves as cofactor. Zn(2+) is required as a cofactor.

It carries out the reaction a 5'-end NAD(+)-phospho-ribonucleoside in mRNA + H2O = a 5'-end phospho-adenosine-phospho-ribonucleoside in mRNA + beta-nicotinamide D-ribonucleotide + 2 H(+). It catalyses the reaction NAD(+) + H2O = beta-nicotinamide D-ribonucleotide + AMP + 2 H(+). The catalysed reaction is NADH + H2O = reduced beta-nicotinamide D-ribonucleotide + AMP + 2 H(+). Its function is as follows. mRNA decapping enzyme that specifically removes the nicotinamide adenine dinucleotide (NAD) cap from a subset of mRNAs by hydrolyzing the diphosphate linkage to produce nicotinamide mononucleotide (NMN) and 5' monophosphate mRNA. The NAD-cap is present at the 5'-end of some mRNAs and stabilizes RNA against 5'-processing. Has preference for mRNAs with a 5'-end purine. Catalyzes the hydrolysis of a broad range of dinucleotide pyrophosphates. This Shigella dysenteriae serotype 1 (strain Sd197) protein is NAD-capped RNA hydrolase NudC.